The primary structure comprises 856 residues: Envelope glycoprotein gp160 (856 aa).

The N-terminal stretch at 1–22 (MKGSKNQLLIAIVLASAYLIHC) is a signal peptide. Residues 23 to 670 (KQFVTVFYGI…FTSWVRYIQY (648 aa)) lie on the Extracellular side of the membrane. N-linked (GlcNAc...) asparagine; by host glycosylation occurs at Asn37. Cys44 and Cys57 form a disulfide bridge. Asn70, Asn79, Asn112, Asn116, Asn128, Asn133, Asn142, Asn182, Asn183, Asn196, Asn228, Asn231, Asn238, Asn262, Asn268, Asn279, Asn290, Asn300, Asn355, Asn390, Asn400, Asn440, and Asn457 each carry an N-linked (GlcNAc...) asparagine; by host glycan. Disulfide bonds link Cys101–Cys204, Cys108–Cys195, Cys113–Cys154, Cys217–Cys247, and Cys227–Cys239. Residues 113-153 (CTRNMTTWTGRTDTQNITIINDTSHARADNCTGLKEEEMID) form a V1 region. A V2 region spans residues 154 to 195 (CQFSMTGLERDKRKQYTEAWYSKDVVCDNNTSSQSKCYMNHC). The V3 stretch occupies residues 295–328 (CKRPGNKTVLPITFMSGFKFHSQPVINKKPRQAW). A disulfide bond links Cys295 and Cys329. 2 disulfide bridges follow: Cys382–Cys439 and Cys389–Cys412. The interval 389–412 (CNMTWFLNWVENRTGQKQRNYAPC) is V4. A V5 region spans residues 455 to 460 (QTNITF). A fusion peptide region spans residues 503–523 (GVFVLGFLGFLATAGSAMGAA). The tract at residues 566–582 (LQARVTAIEKYLKDQAQ) is immunosuppression. N-linked (GlcNAc...) asparagine; by host glycans are attached at residues Asn602, Asn611, and Asn627. The stretch at 615-636 (QEWEQKVRYLEANISQSLEQAQ) forms a coiled coil. The tract at residues 648 to 669 (KLNSWDVFTNWLDFTSWVRYIQ) is MPER; binding to GalCer. Residues 671–691 (GVYVVVGIVALRIVIYIVQML) form a helical membrane-spanning segment. Residues 692–856 (SRLRKGYRPV…IRQGAELALL (165 aa)) lie on the Cytoplasmic side of the membrane. The YXXV motif; contains endocytosis signal motif lies at 698-701 (YRPV). Cys764 carries the S-palmitoyl cysteine; by host lipid modification. Residues 855–856 (LL) carry the Di-leucine internalization motif motif.

The mature envelope protein (Env) consists of a homotrimer of non-covalently associated gp120-gp41 heterodimers. The resulting complex protrudes from the virus surface as a spike. There seems to be as few as 10 spikes on the average virion. Interacts with human CD4, CCR5 and CXCR4, to form a P4HB/PDI-CD4-CXCR4-gp120 complex. Gp120 also interacts with the C-type lectins CD209/DC-SIGN and CLEC4M/DC-SIGNR (collectively referred to as DC-SIGN(R)). Gp120 and gp41 interact with GalCer. As to quaternary structure, the mature envelope protein (Env) consists of a homotrimer of non-covalently associated gp120-gp41 heterodimers. The resulting complex protrudes from the virus surface as a spike. There seems to be as few as 10 spikes on the average virion. Specific enzymatic cleavages in vivo yield mature proteins. Envelope glycoproteins are synthesized as an inactive precursor that is heavily N-glycosylated and processed likely by host cell furin in the Golgi to yield the mature SU and TM proteins. The cleavage site between SU and TM requires the minimal sequence [KR]-X-[KR]-R. In terms of processing, palmitoylation of the transmembrane protein and of Env polyprotein (prior to its proteolytic cleavage) is essential for their association with host cell membrane lipid rafts. Palmitoylation is therefore required for envelope trafficking to classical lipid rafts, but not for viral replication.

Its subcellular location is the virion membrane. The protein localises to the host cell membrane. It localises to the host endosome membrane. Its function is as follows. The surface protein gp120 (SU) attaches the virus to the host lymphoid cell by binding to the primary receptor CD4. This interaction induces a structural rearrangement creating a high affinity binding site for a chemokine coreceptor like CXCR4 and/or CCR5. This peculiar 2 stage receptor-interaction strategy allows gp120 to maintain the highly conserved coreceptor-binding site in a cryptic conformation, protected from neutralizing antibodies. Since CD4 also displays a binding site for the disulfide-isomerase P4HB/PDI, a P4HB/PDI-CD4-CXCR4-gp120 complex may form. In that complex, P4HB/PDI could reach and reduce gp120 disulfide bonds, causing major conformational changes in gp120. TXN, another PDI family member could also be involved in disulfide rearrangements in Env during fusion. These changes are transmitted to the transmembrane protein gp41 and are thought to activate its fusogenic potential by unmasking its fusion peptide. The surface protein gp120 is a ligand for CD209/DC-SIGN and CLEC4M/DC-SIGNR, which are respectively found on dendritic cells (DCs), and on endothelial cells of liver sinusoids and lymph node sinuses. These interactions allow capture of viral particles at mucosal surfaces by these cells and subsequent transmission to permissive cells. DCs are professional antigen presenting cells, critical for host immunity by inducing specific immune responses against a broad variety of pathogens. They act as sentinels in various tissues where they take up antigen, process it, and present it to T-cells following migration to lymphoid organs. HIV subverts the migration properties of dendritic cells to gain access to CD4+ T-cells in lymph nodes. Virus transmission to permissive T-cells occurs either in trans (without DCs infection, through viral capture and transmission), or in cis (following DCs productive infection, through the usual CD4-gp120 interaction), thereby inducing a robust infection. In trans infection, bound virions remain infectious over days and it is proposed that they are not degraded, but protected in non-lysosomal acidic organelles within the DCs close to the cell membrane thus contributing to the viral infectious potential during DCs' migration from the periphery to the lymphoid tissues. On arrival at lymphoid tissues, intact virions recycle back to DCs' cell surface allowing virus transmission to CD4+ T-cells. Virion capture also seems to lead to MHC-II-restricted viral antigen presentation, and probably to the activation of HIV-specific CD4+ cells. Functionally, the transmembrane protein gp41 (TM) acts as a class I viral fusion protein. Under the current model, the protein has at least 3 conformational states: pre-fusion native state, pre-hairpin intermediate state, and post-fusion hairpin state. During fusion of viral and target intracellular membranes, the coiled coil regions (heptad repeats) assume a trimer-of-hairpins structure, positioning the fusion peptide in close proximity to the C-terminal region of the ectodomain. The formation of this structure appears to drive apposition and subsequent fusion of viral and target cell membranes. Complete fusion occurs in host cell endosomes and is dynamin-dependent, however some lipid transfer might occur at the plasma membrane. The virus undergoes clathrin-dependent internalization long before endosomal fusion, thus minimizing the surface exposure of conserved viral epitopes during fusion and reducing the efficacy of inhibitors targeting these epitopes. Membranes fusion leads to delivery of the nucleocapsid into the cytoplasm. In terms of biological role, the envelope glycoprotein gp160 precursor down-modulates cell surface CD4 antigen by interacting with it in the endoplasmic reticulum and blocking its transport to the cell surface. Its function is as follows. The gp120-gp41 heterodimer seems to contribute to T-cell depletion during HIV-1 infection. The envelope glycoproteins expressed on the surface of infected cells induce apoptosis through an interaction with uninfected cells expressing the receptor (CD4) and the coreceptors CXCR4 or CCR5. This type of bystander killing may be obtained by at least three distinct mechanisms. First, the interaction between the 2 cells can induce cellular fusion followed by nuclear fusion within the syncytium. Syncytia are condemned to die from apoptosis. Second, the 2 interacting cells may not fuse entirely and simply exchange plasma membrane lipids, after a sort of hemifusion process, followed by rapid death. Third, it is possible that virus-infected cells, on the point of undergoing apoptosis, fuse with CD4-expressing cells, in which case apoptosis is rapidly transmitted from one cell to the other and thus occurs in a sort of contagious fashion. The gp120-gp41 heterodimer allows rapid transcytosis of the virus through CD4 negative cells such as simple epithelial monolayers of the intestinal, rectal and endocervical epithelial barriers. Both gp120 and gp41 specifically recognize glycosphingolipids galactosyl-ceramide (GalCer) or 3' sulfo-galactosyl-ceramide (GalS) present in the lipid rafts structures of epithelial cells. Binding to these alternative receptors allows the rapid transcytosis of the virus through the epithelial cells. This transcytotic vesicle-mediated transport of virions from the apical side to the basolateral side of the epithelial cells does not involve infection of the cells themselves. The protein is Envelope glycoprotein gp160 (env) of Human immunodeficiency virus type 2 subtype A (isolate NIH-Z) (HIV-2).